The sequence spans 420 residues: Sodium/proton antiporter 2 (420 aa).

Transmembrane regions (helical) follow at residues 25–45, 60–80, 94–114, 136–156, 173–193, 221–241, 242–262, 285–305, 321–341, 363–383, and 400–420; these read IALLMAVSLWVVRSIETSVEI, IVFYMLGAMTIVEIIDAHQGF, ILLWVIGFATFFLSSVLDNLT, LGAVVVIAANAGGAWTPIGDV, IKNLFLPSAISLVVPLALMSL, LVFGVGFGALLFVPLFKSLTG, LPPYMGILLGLGVIWILTDVI, GALFFLGILLSMSSLDAAGIL, LIASIIGVVSAIIDNVPLVAA, FCAGTGGSMLITGSAAGVIFM, and FAFAGFTAGIMTYLAVHNFPL.

The protein belongs to the NhaD Na(+)/H(+) (TC 2.A.62) antiporter family.

The protein localises to the membrane. Functionally, na(+)/H(+) antiporter that extrudes sodium in exchange for external protons. This Arabidopsis thaliana (Mouse-ear cress) protein is Sodium/proton antiporter 2.